A 182-amino-acid chain; its full sequence is Peptidyl-tRNA hydrolase (182 aa).

Position 14 (Tyr-14) interacts with tRNA. His-19 serves as the catalytic Proton acceptor. The tRNA site is built by Phe-64, Asn-66, and Asn-112.

The protein belongs to the PTH family. As to quaternary structure, monomer.

It localises to the cytoplasm. It carries out the reaction an N-acyl-L-alpha-aminoacyl-tRNA + H2O = an N-acyl-L-amino acid + a tRNA + H(+). Its function is as follows. Hydrolyzes ribosome-free peptidyl-tRNAs (with 1 or more amino acids incorporated), which drop off the ribosome during protein synthesis, or as a result of ribosome stalling. Catalyzes the release of premature peptidyl moieties from peptidyl-tRNA molecules trapped in stalled 50S ribosomal subunits, and thus maintains levels of free tRNAs and 50S ribosomes. The polypeptide is Peptidyl-tRNA hydrolase (Wolbachia sp. subsp. Drosophila simulans (strain wRi)).